Consider the following 462-residue polypeptide: Glycine--tRNA ligase (462 aa).

Residues arginine 94 and glutamate 143 each contribute to the substrate site. Residues 175–177 (RNE), 185–190 (FRTCEF), 259–260 (EL), and 308–311 (GLTR) contribute to the ATP site. 190–194 (FEQME) provides a ligand contact to substrate. Substrate is bound at residue 304 to 308 (ETSAG).

It belongs to the class-II aminoacyl-tRNA synthetase family. Homodimer.

Its subcellular location is the cytoplasm. The catalysed reaction is tRNA(Gly) + glycine + ATP = glycyl-tRNA(Gly) + AMP + diphosphate. Its function is as follows. Catalyzes the attachment of glycine to tRNA(Gly). This is Glycine--tRNA ligase from Treponema pallidum (strain Nichols).